The following is a 274-amino-acid chain: Octanoyl-[GcvH]:protein N-octanoyltransferase (274 aa).

The BPL/LPL catalytic domain maps to 37–242 (QGNDAVVRTW…AMKTLGATLS (206 aa)). Catalysis depends on C141, which acts as the Acyl-thioester intermediate.

It belongs to the octanoyltransferase LipL family.

It carries out the reaction N(6)-octanoyl-L-lysyl-[glycine-cleavage complex H protein] + L-lysyl-[lipoyl-carrier protein] = N(6)-octanoyl-L-lysyl-[lipoyl-carrier protein] + L-lysyl-[glycine-cleavage complex H protein]. It participates in protein modification; protein lipoylation via endogenous pathway; protein N(6)-(lipoyl)lysine from octanoyl-[acyl-carrier-protein]. Catalyzes the amidotransfer (transamidation) of the octanoyl moiety from octanoyl-GcvH to the lipoyl domain of the E2 subunit of lipoate-dependent enzymes. The sequence is that of Octanoyl-[GcvH]:protein N-octanoyltransferase from Macrococcus caseolyticus (strain JCSC5402) (Macrococcoides caseolyticum).